We begin with the raw amino-acid sequence, 49 residues long: Large ribosomal subunit protein bL33 (49 aa).

This sequence belongs to the bacterial ribosomal protein bL33 family.

In Nitratidesulfovibrio vulgaris (strain ATCC 29579 / DSM 644 / CCUG 34227 / NCIMB 8303 / VKM B-1760 / Hildenborough) (Desulfovibrio vulgaris), this protein is Large ribosomal subunit protein bL33.